The sequence spans 542 residues: Trans-alpha-bergamotene synthase (542 aa).

Mg(2+) is bound by residues Asp295, Asp299, Asp439, Thr443, and Glu447. The DDXXD motif signature appears at 295 to 299 (DDFYD).

Belongs to the terpene synthase family. Mg(2+) is required as a cofactor.

The enzyme catalyses (2E,6E)-farnesyl diphosphate = (1S,5S,6R)-alpha-bergamotene + diphosphate. It functions in the pathway secondary metabolite biosynthesis; terpenoid biosynthesis. Its function is as follows. Sesquiterpene synthase converting farnesyl diphosphate to trans-alpha-bergamotene as the major product. The protein is Trans-alpha-bergamotene synthase of Phyla dulcis (Aztec sweet herb).